The primary structure comprises 165 residues: Phosphopantetheine adenylyltransferase (165 aa).

Ser10 lines the substrate pocket. Residues 10–11 and His18 each bind ATP; that span reads SF. Substrate is bound by residues Lys42, Leu74, and Arg88. ATP-binding positions include 89–91, Glu99, and 124–130; these read GLR and YSYLSSS.

The protein belongs to the bacterial CoaD family. As to quaternary structure, homohexamer. Mg(2+) is required as a cofactor.

The protein localises to the cytoplasm. The enzyme catalyses (R)-4'-phosphopantetheine + ATP + H(+) = 3'-dephospho-CoA + diphosphate. Its pathway is cofactor biosynthesis; coenzyme A biosynthesis; CoA from (R)-pantothenate: step 4/5. Functionally, reversibly transfers an adenylyl group from ATP to 4'-phosphopantetheine, yielding dephospho-CoA (dPCoA) and pyrophosphate. In Halalkalibacterium halodurans (strain ATCC BAA-125 / DSM 18197 / FERM 7344 / JCM 9153 / C-125) (Bacillus halodurans), this protein is Phosphopantetheine adenylyltransferase.